We begin with the raw amino-acid sequence, 92 residues long: DNA-directed RNA polymerase subunit Rpo5 (92 aa).

The protein belongs to the archaeal Rpo5/eukaryotic RPB5 RNA polymerase subunit family. In terms of assembly, part of the RNA polymerase complex.

Its subcellular location is the cytoplasm. The catalysed reaction is RNA(n) + a ribonucleoside 5'-triphosphate = RNA(n+1) + diphosphate. In terms of biological role, DNA-dependent RNA polymerase (RNAP) catalyzes the transcription of DNA into RNA using the four ribonucleoside triphosphates as substrates. The sequence is that of DNA-directed RNA polymerase subunit Rpo5 from Methanopyrus kandleri (strain AV19 / DSM 6324 / JCM 9639 / NBRC 100938).